A 120-amino-acid chain; its full sequence is CLAVATA3/ESR (CLE)-related protein 9 (120 aa).

Positions M1–A26 are cleaved as a signal peptide. N-linked (GlcNAc...) asparagine glycosylation is present at N35. The interval R85 to N120 is disordered. Over residues I100–L110 the composition is skewed to basic and acidic residues. Residues P112 and P115 each carry the hydroxyproline modification. P115 is a glycosylation site (O-linked (Ara...) hydroxyproline).

It belongs to the CLV3/ESR signal peptide family. The O-glycosylation (arabinosylation) of the hydroxyproline Pro-115 enhances binding affinity of the CLE9p peptide for its receptor. As to expression, mostly expressed in leaves, flowers, stems and apex, and, to a lower extent, in seedlings, roots, siliques and pollen.

The protein resides in the secreted. The protein localises to the extracellular space. Its function is as follows. Extracellular signal peptide that regulates cell fate. Represses root apical meristem maintenance. Regulates the transition of protophloem cells from proliferation to differentiation, thus impinging on postembryonic growth capacity of the root meristem; this signaling pathway requires CRN and CLV2. This is CLAVATA3/ESR (CLE)-related protein 9 from Arabidopsis thaliana (Mouse-ear cress).